Consider the following 95-residue polypeptide: MSIDIETARRVAKLARIKVEDDALPALAGEFNHILGFIEQLNEVDVDDVEPMTSVTPMRLKRREDVVTDGDQQAAVLSNAPDAREGFFAVPKVVE.

This sequence belongs to the GatC family. As to quaternary structure, heterotrimer of A, B and C subunits.

The catalysed reaction is L-glutamyl-tRNA(Gln) + L-glutamine + ATP + H2O = L-glutaminyl-tRNA(Gln) + L-glutamate + ADP + phosphate + H(+). It catalyses the reaction L-aspartyl-tRNA(Asn) + L-glutamine + ATP + H2O = L-asparaginyl-tRNA(Asn) + L-glutamate + ADP + phosphate + 2 H(+). Functionally, allows the formation of correctly charged Asn-tRNA(Asn) or Gln-tRNA(Gln) through the transamidation of misacylated Asp-tRNA(Asn) or Glu-tRNA(Gln) in organisms which lack either or both of asparaginyl-tRNA or glutaminyl-tRNA synthetases. The reaction takes place in the presence of glutamine and ATP through an activated phospho-Asp-tRNA(Asn) or phospho-Glu-tRNA(Gln). This is Aspartyl/glutamyl-tRNA(Asn/Gln) amidotransferase subunit C from Dinoroseobacter shibae (strain DSM 16493 / NCIMB 14021 / DFL 12).